The following is a 1781-amino-acid chain: BCL-6 corepressor-like protein 1 (1781 aa).

Disordered regions lie at residues 64-136 and 337-362; these read AVGS…SHSR and ASTP…GPPS. Polar residues-rich tracts occupy residues 66–82 and 127–136; these read GSGS…NTTE and PDSTEASHSR. S490 carries the phosphoserine modification. Over residues 521–531 the composition is skewed to low complexity; the sequence is SCTSPSSSTNS. Disordered regions lie at residues 521–545, 561–616, 733–777, 869–895, and 933–960; these read SCTS…LADT, LLPA…EMPL, NRDP…STVK, PLGS…PEQD, and QPSS…TPKM. Polar residues predominate over residues 581 to 594; the sequence is TDQQTEGTSVTFSP. A phosphoserine mark is found at S593 and S607. Residue K741 forms a Glycyl lysine isopeptide (Lys-Gly) (interchain with G-Cter in SUMO2) linkage. The residue at position 1024 (S1024) is a Phosphoserine. K1087 participates in a covalent cross-link: Glycyl lysine isopeptide (Lys-Gly) (interchain with G-Cter in SUMO2). Residues 1100–1484 form a disordered region; that stretch reads WQPDEETESL…PTARQIPPEA (385 aa). A compositionally biased stretch (basic and acidic residues) spans 1116–1127; it reads CNKEKEIEEEPR. A Phosphoserine modification is found at S1162. Positions 1176-1185 are enriched in basic residues; sequence VRGKHKHRKP. A compositionally biased stretch (basic and acidic residues) spans 1195–1213; sequence KRTDGHEEGSLEKKAKNSF. Over residues 1222–1234 the composition is skewed to polar residues; that stretch reads STRTRSQSGSICS. Basic and acidic residues-rich tracts occupy residues 1271–1284 and 1297–1307; these read TQRD…HAQD and RAREMPWRTEA. Positions 1314–1324 are enriched in acidic residues; the sequence is TNEEEEDDEEE. The segment covering 1328 to 1339 has biased composition (basic residues); the sequence is KRKKRRRQKSRK. A compositionally biased stretch (basic and acidic residues) spans 1350–1362; sequence EEQRRKGRADSKA. Polar residues-rich tracts occupy residues 1381 to 1394 and 1437 to 1449; these read LLLS…SDSP and RWSQ…SKSP. ANK repeat units lie at residues 1493–1523, 1527–1556, and 1560–1589; these read AGET…DVNH, AGYT…NVNC, and DGTR…DPTL. A PCGF Ub-like fold domain (PUFD); required for the interaction with the KDM2B-SKP1 heterodimeric complex region spans residues 1664-1781; the sequence is DDFMFELSDK…SEVEYQSWSS (118 aa).

It belongs to the BCOR family. In terms of assembly, interacts with PCGF1, forming heterodimers. The PCGF1-BCORL1 heterodimeric complex interacts with the KDM2B-SKP1 heterodimeric complex to form a homotetrameric polycomb repression complex 1 (PRC1.1). Interacts with SKP1. Interacts with CTBP1, HDAC4, HDAC5 and HDAC7. Highly expressed in lung and testis.

The protein localises to the nucleus. Transcriptional corepressor. May specifically inhibit gene expression when recruited to promoter regions by sequence specific DNA-binding proteins such as BCL6. This repression may be mediated at least in part by histone deacetylase activities which can associate with this corepressor. The polypeptide is BCL-6 corepressor-like protein 1 (Bcorl1) (Mus musculus (Mouse)).